A 541-amino-acid polypeptide reads, in one-letter code: Eukaryotic translation initiation factor 3 subunit L (541 aa).

The PCI domain maps to 308–516 (TFSDILLYIQ…IHIADTKVSH (209 aa)).

It belongs to the eIF-3 subunit L family. Component of the eukaryotic translation initiation factor 3 (eIF-3) complex. The eIF-3 complex interacts with pix.

It is found in the cytoplasm. Functionally, component of the eukaryotic translation initiation factor 3 (eIF-3) complex, which is involved in protein synthesis of a specialized repertoire of mRNAs and, together with other initiation factors, stimulates binding of mRNA and methionyl-tRNAi to the 40S ribosome. The eIF-3 complex specifically targets and initiates translation of a subset of mRNAs involved in cell proliferation. The protein is Eukaryotic translation initiation factor 3 subunit L of Drosophila persimilis (Fruit fly).